The chain runs to 147 residues: Deoxyuridine 5'-triphosphate nucleotidohydrolase (147 aa).

Ser-69, Gly-82, Asp-85, Tyr-88, Lys-93, Arg-137, Phe-142, and Gly-143 together coordinate dUMP.

The protein belongs to the dUTPase family. As to quaternary structure, homotrimer. Mg(2+) serves as cofactor.

It carries out the reaction dUTP + H2O = dUMP + diphosphate + H(+). Its pathway is pyrimidine metabolism; dUMP biosynthesis; dUMP from dCTP (dUTP route): step 2/2. In terms of biological role, involved in nucleotide metabolism via production of dUMP, the immediate precursor of thymidine nucleotides, and decreases the intracellular concentration of dUTP so that uracil cannot be incorporated into DNA. Shows a significant activity against dITP, another potentially mutagenic nucleotide. The protein is Deoxyuridine 5'-triphosphate nucleotidohydrolase of Saccharomyces cerevisiae (strain ATCC 204508 / S288c) (Baker's yeast).